The following is a 75-amino-acid chain: Protein SlyX homolog (75 aa).

Residues 56-75 are disordered; it reads KNMDSSNMEDPANEPPPPHY.

It belongs to the SlyX family.

This is Protein SlyX homolog from Vibrio parahaemolyticus serotype O3:K6 (strain RIMD 2210633).